The sequence spans 131 residues: Profilin-6 (131 aa).

It belongs to the profilin family. As to quaternary structure, occurs in many kinds of cells as a complex with monomeric actin in a 1:1 ratio.

It localises to the cytoplasm. The protein resides in the cytoskeleton. Binds to actin and affects the structure of the cytoskeleton. At high concentrations, profilin prevents the polymerization of actin, whereas it enhances it at low concentrations. By binding to PIP2, it inhibits the formation of IP3 and DG. The chain is Profilin-6 from Hevea brasiliensis (Para rubber tree).